The following is a 173-amino-acid chain: Transmembrane protein 240 (173 aa).

The next 2 helical transmembrane spans lie at 5 to 25 (ANTMIFMILGASIVMAIACLM) and 90 to 110 (LMLGLLLGFCISWFLVWMDGV). Phosphoserine is present on Ser169.

The protein localises to the synapse. Its subcellular location is the cell membrane. The protein is Transmembrane protein 240 (Tmem240) of Mus musculus (Mouse).